Here is a 127-residue protein sequence, read N- to C-terminus: Aspartate 1-decarboxylase (127 aa).

Residue serine 25 is the Schiff-base intermediate with substrate; via pyruvic acid of the active site. Serine 25 carries the pyruvic acid (Ser) modification. Position 57 (threonine 57) interacts with substrate. Tyrosine 58 serves as the catalytic Proton donor. 73 to 75 contributes to the substrate binding site; that stretch reads GAA.

The protein belongs to the PanD family. Heterooctamer of four alpha and four beta subunits. It depends on pyruvate as a cofactor. Is synthesized initially as an inactive proenzyme, which is activated by self-cleavage at a specific serine bond to produce a beta-subunit with a hydroxyl group at its C-terminus and an alpha-subunit with a pyruvoyl group at its N-terminus.

Its subcellular location is the cytoplasm. It catalyses the reaction L-aspartate + H(+) = beta-alanine + CO2. The protein operates within cofactor biosynthesis; (R)-pantothenate biosynthesis; beta-alanine from L-aspartate: step 1/1. Its function is as follows. Catalyzes the pyruvoyl-dependent decarboxylation of aspartate to produce beta-alanine. This chain is Aspartate 1-decarboxylase, found in Desulfitobacterium hafniense (strain DSM 10664 / DCB-2).